Reading from the N-terminus, the 251-residue chain is Triosephosphate isomerase (251 aa).

Residue 9-11 (NWK) coordinates substrate. His-93 functions as the Electrophile in the catalytic mechanism. Catalysis depends on Glu-163, which acts as the Proton acceptor. Substrate is bound by residues Gly-169, Ser-209, and 230 to 231 (GG).

The protein belongs to the triosephosphate isomerase family. As to quaternary structure, homodimer.

The protein resides in the cytoplasm. The enzyme catalyses D-glyceraldehyde 3-phosphate = dihydroxyacetone phosphate. It functions in the pathway carbohydrate biosynthesis; gluconeogenesis. The protein operates within carbohydrate degradation; glycolysis; D-glyceraldehyde 3-phosphate from glycerone phosphate: step 1/1. Its function is as follows. Involved in the gluconeogenesis. Catalyzes stereospecifically the conversion of dihydroxyacetone phosphate (DHAP) to D-glyceraldehyde-3-phosphate (G3P). This Ruegeria pomeroyi (strain ATCC 700808 / DSM 15171 / DSS-3) (Silicibacter pomeroyi) protein is Triosephosphate isomerase.